The following is a 182-amino-acid chain: Inosine/xanthosine triphosphatase (182 aa).

This sequence belongs to the YjjX NTPase family. In terms of assembly, homodimer. Requires Mg(2+) as cofactor. Mn(2+) serves as cofactor.

The enzyme catalyses XTP + H2O = XDP + phosphate + H(+). The catalysed reaction is ITP + H2O = IDP + phosphate + H(+). Its function is as follows. Phosphatase that hydrolyzes non-canonical purine nucleotides such as XTP and ITP to their respective diphosphate derivatives. Probably excludes non-canonical purines from DNA/RNA precursor pool, thus preventing their incorporation into DNA/RNA and avoiding chromosomal lesions. The sequence is that of Inosine/xanthosine triphosphatase from Vibrio parahaemolyticus serotype O3:K6 (strain RIMD 2210633).